Reading from the N-terminus, the 157-residue chain is Peptide methionine sulfoxide reductase MsrA (157 aa).

Residue cysteine 10 is part of the active site.

This sequence belongs to the MsrA Met sulfoxide reductase family.

The enzyme catalyses L-methionyl-[protein] + [thioredoxin]-disulfide + H2O = L-methionyl-(S)-S-oxide-[protein] + [thioredoxin]-dithiol. It carries out the reaction [thioredoxin]-disulfide + L-methionine + H2O = L-methionine (S)-S-oxide + [thioredoxin]-dithiol. Functionally, has an important function as a repair enzyme for proteins that have been inactivated by oxidation. Catalyzes the reversible oxidation-reduction of methionine sulfoxide in proteins to methionine. This is Peptide methionine sulfoxide reductase MsrA from Clostridium botulinum (strain Loch Maree / Type A3).